The primary structure comprises 312 residues: tRNA dimethylallyltransferase (312 aa).

11-18 (GLTATGKT) contributes to the ATP binding site. Substrate is bound at residue 13–18 (TATGKT). The segment at 36–39 (DSMC) is interaction with substrate tRNA.

It belongs to the IPP transferase family. Monomer. Mg(2+) is required as a cofactor.

The enzyme catalyses adenosine(37) in tRNA + dimethylallyl diphosphate = N(6)-dimethylallyladenosine(37) in tRNA + diphosphate. In terms of biological role, catalyzes the transfer of a dimethylallyl group onto the adenine at position 37 in tRNAs that read codons beginning with uridine, leading to the formation of N6-(dimethylallyl)adenosine (i(6)A). This chain is tRNA dimethylallyltransferase, found in Caldicellulosiruptor saccharolyticus (strain ATCC 43494 / DSM 8903 / Tp8T 6331).